A 120-amino-acid polypeptide reads, in one-letter code: Xibalbin-1 (120 aa).

The signal sequence occupies residues 1-21; sequence MISKILIAACALLLISHLVLA. A propeptide spanning residues 22-63 is cleaved from the precursor; it reads VPYLEDGLNSLHNRTGESDETRGYTIQLLKEMPEDDAVEDYS. Intrachain disulfides connect Cys79–Cys94, Cys86–Cys99, Cys93–Cys110, and Cys101–Cys108.

It belongs to the xibalbin-1 family. As to expression, expressed by the venom gland. Not found in the whole body.

It localises to the secreted. In terms of biological role, probable neurotoxin. Strongly inhibits voltage-gated potassium channels (Kv1.1/KCNA1, Kv1.2/KCNA2, Kv1.3/KCNA3, and Kv1.6/KCNA6, with the highest toxicity against Kv1.6 (74% inhibition at 1 uM)) and mildly inhibits sodium channels (Nav1.2/SCN2A, Nav1.4/SCN4A, Nav1.5/SCN5A, Nav1.6/SCN8A, and BgNav). Induces activation of protein kinase A type II (PKA-II) and MAP kinase Erk1/2 in primary nociceptive and non-nociceptive sensory neurons. Does not show cytotoxic activity. Does not have an impact on Ca2+, cAMP, and NO signaling in the cell types analyzed. Does not interfere with the adhesion of leukocytes to endothelial cells. The polypeptide is Xibalbin-1 (Xibalbanus tulumensis (Blind cave remipede)).